Reading from the N-terminus, the 419-residue chain is Maltoporin 2 (419 aa).

The N-terminal stretch at methionine 1–alanine 23 is a signal peptide.

It belongs to the porin LamB (TC 1.B.3) family. As to quaternary structure, homotrimer formed of three 18-stranded antiparallel beta-barrels, containing three independent channels.

It is found in the cell outer membrane. It catalyses the reaction beta-maltose(in) = beta-maltose(out). In terms of biological role, involved in the transport of maltose and maltodextrins. This is Maltoporin 2 from Yersinia pestis bv. Antiqua (strain Antiqua).